The following is a 394-amino-acid chain: Dual-specificity RNA methyltransferase RlmN (394 aa).

Catalysis depends on E115, which acts as the Proton acceptor. Residues 121-360 (EADRATLCVS…VIVRKTRGDD (240 aa)) enclose the Radical SAM core domain. An intrachain disulfide couples C128 to C365. Positions 135, 139, and 142 each coordinate [4Fe-4S] cluster. Residues 189-190 (GE), S221, 243-245 (SLH), and N322 contribute to the S-adenosyl-L-methionine site. The S-methylcysteine intermediate role is filled by C365.

It belongs to the radical SAM superfamily. RlmN family. It depends on [4Fe-4S] cluster as a cofactor.

It localises to the cytoplasm. It carries out the reaction adenosine(2503) in 23S rRNA + 2 reduced [2Fe-2S]-[ferredoxin] + 2 S-adenosyl-L-methionine = 2-methyladenosine(2503) in 23S rRNA + 5'-deoxyadenosine + L-methionine + 2 oxidized [2Fe-2S]-[ferredoxin] + S-adenosyl-L-homocysteine. The enzyme catalyses adenosine(37) in tRNA + 2 reduced [2Fe-2S]-[ferredoxin] + 2 S-adenosyl-L-methionine = 2-methyladenosine(37) in tRNA + 5'-deoxyadenosine + L-methionine + 2 oxidized [2Fe-2S]-[ferredoxin] + S-adenosyl-L-homocysteine. Specifically methylates position 2 of adenine 2503 in 23S rRNA and position 2 of adenine 37 in tRNAs. m2A2503 modification seems to play a crucial role in the proofreading step occurring at the peptidyl transferase center and thus would serve to optimize ribosomal fidelity. The polypeptide is Dual-specificity RNA methyltransferase RlmN (Pasteurella multocida (strain Pm70)).